A 328-amino-acid polypeptide reads, in one-letter code: tRNA dimethylallyltransferase (328 aa).

25-32 lines the ATP pocket; sequence GPTAVGKT. 27–32 contributes to the substrate binding site; it reads TAVGKT. The interaction with substrate tRNA stretch occupies residues 50–53; the sequence is DSMQ.

This sequence belongs to the IPP transferase family. Monomer. The cofactor is Mg(2+).

It carries out the reaction adenosine(37) in tRNA + dimethylallyl diphosphate = N(6)-dimethylallyladenosine(37) in tRNA + diphosphate. Its function is as follows. Catalyzes the transfer of a dimethylallyl group onto the adenine at position 37 in tRNAs that read codons beginning with uridine, leading to the formation of N6-(dimethylallyl)adenosine (i(6)A). The chain is tRNA dimethylallyltransferase from Halothermothrix orenii (strain H 168 / OCM 544 / DSM 9562).